The chain runs to 237 residues: GATA zinc finger domain-containing protein 18 (237 aa).

2 stretches are compositionally biased toward low complexity: residues 1–28 and 87–118; these read MAHNNNNNINNNNNNNNNNNNNNNKNNN and NTSTNTTTTTTTTTTTTTTSSPNNNVITPNSN. Disordered regions lie at residues 1-31, 78-119, and 140-186; these read MAHNNNNNINNNNNNNNNNNNNNNKNNNSEY, PTNT…NSNL, and FEEG…GGCS. Over residues 140–151 the composition is skewed to acidic residues; that stretch reads FEEGDDEEETSS. Residues 152 to 167 are compositionally biased toward low complexity; the sequence is DSDSSSSSSTSSSSSE. A GATA-type zinc finger spans residues 185-212; the sequence is CSICKTQETPYWRKGKDGDKTVYLCNAC.

The sequence is that of GATA zinc finger domain-containing protein 18 (gtaR) from Dictyostelium discoideum (Social amoeba).